The chain runs to 152 residues: Deoxyuridine 5'-triphosphate nucleotidohydrolase (152 aa).

Residues Arg-71–Gly-73, Asn-84, Leu-88–Asp-90, and Met-98 contribute to the substrate site.

It belongs to the dUTPase family. It depends on Mg(2+) as a cofactor.

It catalyses the reaction dUTP + H2O = dUMP + diphosphate + H(+). It participates in pyrimidine metabolism; dUMP biosynthesis; dUMP from dCTP (dUTP route): step 2/2. Its function is as follows. This enzyme is involved in nucleotide metabolism: it produces dUMP, the immediate precursor of thymidine nucleotides and it decreases the intracellular concentration of dUTP so that uracil cannot be incorporated into DNA. The polypeptide is Deoxyuridine 5'-triphosphate nucleotidohydrolase (Cronobacter sakazakii (strain ATCC BAA-894) (Enterobacter sakazakii)).